Consider the following 313-residue polypeptide: Beta-ketoacyl-[acyl-carrier-protein] synthase III (313 aa).

Active-site residues include Cys112 and His238. The tract at residues 239–243 is ACP-binding; it reads QANIR. Asn268 is an active-site residue.

It belongs to the thiolase-like superfamily. FabH family. In terms of assembly, homodimer.

It is found in the cytoplasm. The enzyme catalyses malonyl-[ACP] + acetyl-CoA + H(+) = 3-oxobutanoyl-[ACP] + CO2 + CoA. The protein operates within lipid metabolism; fatty acid biosynthesis. In terms of biological role, catalyzes the condensation reaction of fatty acid synthesis by the addition to an acyl acceptor of two carbons from malonyl-ACP. Catalyzes the first condensation reaction which initiates fatty acid synthesis and may therefore play a role in governing the total rate of fatty acid production. Possesses both acetoacetyl-ACP synthase and acetyl transacylase activities. Its substrate specificity determines the biosynthesis of branched-chain and/or straight-chain of fatty acids. The protein is Beta-ketoacyl-[acyl-carrier-protein] synthase III of Staphylococcus aureus (strain bovine RF122 / ET3-1).